We begin with the raw amino-acid sequence, 165 residues long: MAKVIKINLIVNKRMSPAIILIGVLILIVLFVIKFNSSEVSSILTSEVTSEGDDEHETETRETTGCISQLNTLRATLAAKKKELKTLRTARKKECTEQLAKTQAEVDRIQAKIDNFSSRTKIVPLPGGEVGPPYNPPPPRTNTRPNPRPNPRPAQLPQLYNYGYY.

Residues 15–35 (MSPAIILIGVLILIVLFVIKF) traverse the membrane as a helical segment. Positions 67 to 119 (ISQLNTLRATLAAKKKELKTLRTARKKECTEQLAKTQAEVDRIQAKIDNFSSR) form a coiled coil. Positions 123–156 (VPLPGGEVGPPYNPPPPRTNTRPNPRPNPRPAQL) are disordered. The segment covering 133 to 154 (PYNPPPPRTNTRPNPRPNPRPA) has biased composition (pro residues).

It localises to the membrane. This is an uncharacterized protein from Acheta domesticus (House cricket).